Reading from the N-terminus, the 182-residue chain is Adenine phosphoribosyltransferase (182 aa).

The protein belongs to the purine/pyrimidine phosphoribosyltransferase family. Homodimer.

It is found in the cytoplasm. It carries out the reaction AMP + diphosphate = 5-phospho-alpha-D-ribose 1-diphosphate + adenine. It functions in the pathway purine metabolism; AMP biosynthesis via salvage pathway; AMP from adenine: step 1/1. Catalyzes a salvage reaction resulting in the formation of AMP, that is energically less costly than de novo synthesis. The sequence is that of Adenine phosphoribosyltransferase from Sulfurimonas denitrificans (strain ATCC 33889 / DSM 1251) (Thiomicrospira denitrificans (strain ATCC 33889 / DSM 1251)).